The primary structure comprises 985 residues: Guanine nucleotide exchange protein smcr8b (985 aa).

The uDENN FLCN/SMCR8-type domain occupies 47-225 (ISSAKLKKDF…VKCSSEREPI (179 aa)). A compositionally biased stretch (basic and acidic residues) spans 242 to 292 (NEKSSHTDEISPQEKDGCGNSRKVEVKLENENRSHFEHEQYGKQRKDKPDK). Disordered regions lie at residues 242 to 301 (NEKS…PLAN), 502 to 528 (QSQV…SPAE), and 639 to 659 (EESP…EDNN). The cDENN FLCN/SMCR8-type domain maps to 390–895 (RLKTLEELCD…LINLLVEPKS (506 aa)). Over residues 502-514 (QSQVQHSTLNTPS) the composition is skewed to polar residues. The dDENN FLCN/SMCR8-type domain occupies 904 to 962 (FTFAQSVQSKLVTKAFLLTFSHGHPSPSRPQGSSGTECFLSELHTDDKKILRYLSELIK).

This sequence belongs to the SMCR8 family. Component of the C9orf72-SMCR8 complex. The C9orf72-SMCR8 complex associates with the ATG1/ULK1 kinase complex.

It is found in the cytoplasm. Its subcellular location is the nucleus. Its function is as follows. Component of the C9orf72-SMCR8 complex, a complex that has guanine nucleotide exchange factor (GEF) activity and regulates autophagy. In the complex, C9orf72 and SMCR8 probably constitute the catalytic subunits that promote the exchange of GDP to GTP, converting inactive GDP-bound RAB8A and RAB39B into their active GTP-bound form, thereby promoting autophagosome maturation. The C9orf72-SMCR8 complex also acts as a negative regulator of autophagy initiation by interacting with the ATG1/ULK1 kinase complex and inhibiting its protein kinase activity. In Danio rerio (Zebrafish), this protein is Guanine nucleotide exchange protein smcr8b (smcr8b).